The chain runs to 126 residues: Protein ApaG (126 aa).

The ApaG domain maps to 2–126; that stretch reads SDPRYQIDVS…FRLAVPGALH (125 aa).

The protein is Protein ApaG of Pseudomonas fluorescens (strain SBW25).